Here is a 627-residue protein sequence, read N- to C-terminus: Interferon-induced GTP-binding protein MxB (627 aa).

A Dynamin-type G domain is found at 34–307; the sequence is DLALPAIAVI…LVHHIQRSLP (274 aa). Residues 44–51 form a G1 motif region; sequence GDQSSGKS. Residue 44–51 coordinates GTP; it reads GDQSSGKS. The G2 motif stretch occupies residues 69–71; sequence VTR. A G3 motif region spans residues 145-148; sequence DLPG. GTP contacts are provided by residues 145–149 and 214–217; these read DLPGI and TKPD. Residues 214–217 form a G4 motif region; sequence TKPD. Residues 246–249 are G5 motif; sequence RCRG. Residues 541 to 627 enclose the GED domain; it reads LSEMKLHLES…MKAQNLLATY (87 aa).

The protein belongs to the TRAFAC class dynamin-like GTPase superfamily. Dynamin/Fzo/YdjA family.

It localises to the cytoplasm. This Danio rerio (Zebrafish) protein is Interferon-induced GTP-binding protein MxB (mxb).